Consider the following 290-residue polypeptide: Arylamine N-acetyltransferase 1 (290 aa).

At Met-1 the chain carries N-acetylmethionine. The active-site Acyl-thioester intermediate is the Cys-68. Residues Thr-103 and Gly-104 each contribute to the CoA site. 106–107 (IH) lines the substrate pocket. Residues His-107 and Asp-122 contribute to the active site. 2 residues coordinate CoA: Tyr-208 and Ser-214.

It belongs to the arylamine N-acetyltransferase family.

Its subcellular location is the cytoplasm. It carries out the reaction an arylamine + acetyl-CoA = an N-acetylarylamine + CoA. In Oryctolagus cuniculus (Rabbit), this protein is Arylamine N-acetyltransferase 1 (NAT1).